The chain runs to 186 residues: Probable RNA 2'-phosphotransferase (186 aa).

It belongs to the KptA/TPT1 family.

Functionally, removes the 2'-phosphate from RNA via an intermediate in which the phosphate is ADP-ribosylated by NAD followed by a presumed transesterification to release the RNA and generate ADP-ribose 1''-2''-cyclic phosphate (APPR&gt;P). May function as an ADP-ribosylase. This chain is Probable RNA 2'-phosphotransferase, found in Hahella chejuensis (strain KCTC 2396).